The chain runs to 494 residues: Sulfate adenylyltransferase subunit 1 (494 aa).

Residues 24 to 240 form the tr-type G domain; it reads TRPLRLITCG…LELATVRSAQ (217 aa). Positions 33-40 are G1; it reads GSVDDGKS. 33 to 40 serves as a coordination point for GTP; that stretch reads GSVDDGKS. The tract at residues 91 to 95 is G2; it reads GITID. The G3 stretch occupies residues 112 to 115; the sequence is DTPG. Residues 112–116 and 167–170 each bind GTP; these read DTPGH and NKID. Residues 167–170 are G4; it reads NKID. The tract at residues 204 to 206 is G5; sequence SAL.

The protein belongs to the TRAFAC class translation factor GTPase superfamily. Classic translation factor GTPase family. CysN/NodQ subfamily. Heterodimer composed of CysD, the smaller subunit, and CysN.

The enzyme catalyses sulfate + ATP + H(+) = adenosine 5'-phosphosulfate + diphosphate. The protein operates within sulfur metabolism; hydrogen sulfide biosynthesis; sulfite from sulfate: step 1/3. Its function is as follows. With CysD forms the ATP sulfurylase (ATPS) that catalyzes the adenylation of sulfate producing adenosine 5'-phosphosulfate (APS) and diphosphate, the first enzymatic step in sulfur assimilation pathway. APS synthesis involves the formation of a high-energy phosphoric-sulfuric acid anhydride bond driven by GTP hydrolysis by CysN coupled to ATP hydrolysis by CysD. This Rhizobium rhizogenes (strain K84 / ATCC BAA-868) (Agrobacterium radiobacter) protein is Sulfate adenylyltransferase subunit 1.